The primary structure comprises 382 residues: Probable inactive dehydrogenase easA (382 aa).

FMN contacts are provided by residues 25 to 27 (PMT), Ala60, Gln102, and His171. Positions 171 and 174 each coordinate substrate. FMN-binding positions include Lys223, Gly299, 324 to 325 (GR), and Arg325. Tyr352 serves as a coordination point for substrate.

It belongs to the NADH:flavin oxidoreductase/NADH oxidase family.

Probable inactive dehydrogenase; part of the gene cluster that mediates the biosynthesis of fungal ergot alkaloid. DmaW catalyzes the first step of ergot alkaloid biosynthesis by condensing dimethylallyl diphosphate (DMAP) and tryptophan to form 4-dimethylallyl-L-tryptophan. The second step is catalyzed by the methyltransferase easF that methylates 4-dimethylallyl-L-tryptophan in the presence of S-adenosyl-L-methionine, resulting in the formation of 4-dimethylallyl-L-abrine. The catalase easC and the FAD-dependent oxidoreductase easE then transform 4-dimethylallyl-L-abrine to chanoclavine-I which is further oxidized by easD in the presence of NAD(+), resulting in the formation of chanoclavine-I aldehyde. Agroclavine dehydrogenase easG then mediates the conversion of chanoclavine-I aldehyde to agroclavine via a non-enzymatic adduct reaction: the substrate is an iminium intermediate that is formed spontaneously from chanoclavine-I aldehyde in the presence of glutathione. Further conversion of agroclavine to paspalic acid is a two-step process involving oxidation of agroclavine to elymoclavine and of elymoclavine to paspalic acid, the second step being performed by the elymoclavine oxidase cloA. However, cloA does not encode a functional enzyme indicating that C.fusiformis terminates its ergot alkaloid pathway at elymoclavine. The protein is Probable inactive dehydrogenase easA of Claviceps fusiformis (Ergot fungus).